The primary structure comprises 423 residues: UDP-N-acetylmuramoylalanine--D-glutamate ligase (423 aa).

112 to 118 (GSVGKST) is an ATP binding site.

Belongs to the MurCDEF family.

The protein localises to the cytoplasm. The enzyme catalyses UDP-N-acetyl-alpha-D-muramoyl-L-alanine + D-glutamate + ATP = UDP-N-acetyl-alpha-D-muramoyl-L-alanyl-D-glutamate + ADP + phosphate + H(+). The protein operates within cell wall biogenesis; peptidoglycan biosynthesis. Functionally, cell wall formation. Catalyzes the addition of glutamate to the nucleotide precursor UDP-N-acetylmuramoyl-L-alanine (UMA). This chain is UDP-N-acetylmuramoylalanine--D-glutamate ligase, found in Thermosipho africanus (strain TCF52B).